The following is a 66-amino-acid chain: Large ribosomal subunit protein bL35 (66 aa).

Residues 21 to 40 (KIKSTQSAKRHGMTKRSKRS) form a disordered region. The segment covering 28-40 (AKRHGMTKRSKRS) has biased composition (basic residues).

The protein belongs to the bacterial ribosomal protein bL35 family.

The polypeptide is Large ribosomal subunit protein bL35 (Ehrlichia canis (strain Jake)).